Here is a 139-residue protein sequence, read N- to C-terminus: Actin-depolymerizing factor 1 (139 aa).

In terms of domain architecture, ADF-H spans Ala-5–Asn-139.

The protein belongs to the actin-binding proteins ADF family.

Functionally, actin-depolymerizing protein. Severs actin filaments (F-actin) and binds to actin monomers. This chain is Actin-depolymerizing factor 1 (ADF1), found in Petunia hybrida (Petunia).